Consider the following 339-residue polypeptide: D-erythrose-4-phosphate dehydrogenase (339 aa).

Residue R11–I12 participates in NAD(+) binding. Substrate contacts are provided by residues S158 to T160, R204, T217 to K218, and R240. C159 serves as the catalytic Nucleophile. N322 contacts NAD(+).

This sequence belongs to the glyceraldehyde-3-phosphate dehydrogenase family. Epd subfamily. Homotetramer.

The protein localises to the cytoplasm. It carries out the reaction D-erythrose 4-phosphate + NAD(+) + H2O = 4-phospho-D-erythronate + NADH + 2 H(+). It participates in cofactor biosynthesis; pyridoxine 5'-phosphate biosynthesis; pyridoxine 5'-phosphate from D-erythrose 4-phosphate: step 1/5. Functionally, catalyzes the NAD-dependent conversion of D-erythrose 4-phosphate to 4-phosphoerythronate. The sequence is that of D-erythrose-4-phosphate dehydrogenase from Aliivibrio salmonicida (strain LFI1238) (Vibrio salmonicida (strain LFI1238)).